Here is a 224-residue protein sequence, read N- to C-terminus: Cytidylate kinase (224 aa).

11-19 (GPAAAGKST) is an ATP binding site.

Belongs to the cytidylate kinase family. Type 1 subfamily.

It is found in the cytoplasm. The catalysed reaction is CMP + ATP = CDP + ADP. It carries out the reaction dCMP + ATP = dCDP + ADP. The protein is Cytidylate kinase of Geobacillus sp. (strain WCH70).